The following is a 198-amino-acid chain: Na(+)-translocating NADH-quinone reductase subunit E (198 aa).

The next 6 helical transmembrane spans lie at 11 to 31, 35 to 55, 77 to 97, 110 to 130, 140 to 160, and 176 to 196; these read SVFI…FLAV, VSTA…SVPV, FLNF…LEMI, GIFL…SFMV, IVYG…LAGI, and LGIT…FSGV.

This sequence belongs to the NqrDE/RnfAE family. As to quaternary structure, composed of six subunits; NqrA, NqrB, NqrC, NqrD, NqrE and NqrF.

It is found in the cell inner membrane. It carries out the reaction a ubiquinone + n Na(+)(in) + NADH + H(+) = a ubiquinol + n Na(+)(out) + NAD(+). NQR complex catalyzes the reduction of ubiquinone-1 to ubiquinol by two successive reactions, coupled with the transport of Na(+) ions from the cytoplasm to the periplasm. NqrA to NqrE are probably involved in the second step, the conversion of ubisemiquinone to ubiquinol. In Histophilus somni (strain 2336) (Haemophilus somnus), this protein is Na(+)-translocating NADH-quinone reductase subunit E.